Here is a 515-residue protein sequence, read N- to C-terminus: Mucin-like protein Glc1.8b (515 aa).

The signal sequence occupies residues 1-20 (MSQITLIILVLAIGFSCTKS). Topologically, residues 21–467 (HPINSTRDGE…ANDIKKPAFP (447 aa)) are extracellular. N-linked (GlcNAc...) asparagine; by host glycosylation is found at asparagine 24, asparagine 45, asparagine 51, asparagine 60, asparagine 85, asparagine 93, asparagine 102, asparagine 123, asparagine 129, asparagine 138, asparagine 180, asparagine 201, asparagine 207, asparagine 216, asparagine 258, asparagine 279, asparagine 285, asparagine 294, asparagine 319, asparagine 327, asparagine 336, asparagine 357, asparagine 363, asparagine 372, asparagine 397, asparagine 405, asparagine 413, asparagine 434, and asparagine 441. Positions 80–114 (SKKDENITGQSEINTSAKSQPINSTRDGEDSGTDL) are disordered. The segment covering 86-104 (ITGQSEINTSAKSQPINST) has biased composition (polar residues). The interval 314-358 (SKKDENITGQSEINTSAKSQPINSTRDGEDSGTDLKNLLTDPANT) is disordered. Residues 320 to 338 (ITGQSEINTSAKSQPINST) show a composition bias toward polar residues. Residues 393-413 (RKDENVTGQSEFNISTNSNLN) form a disordered region. A helical transmembrane segment spans residues 468 to 488 (YCIILITFQIVTVGMIIYLVF). At 489–515 (RTMRKPCQSERAIPLNSFGFGNNSSYE) the chain is on the cytoplasmic side.

Belongs to the polydnaviridae Glc1.8 protein family.

Its subcellular location is the host membrane. Its function is as follows. Involved in suppression of the insect cellular immune response. Inhibits host hemocyte adhesion and phagocytosis. The polypeptide is Mucin-like protein Glc1.8b (O16) (Microplitis demolitor (Parasitoid wasp)).